Consider the following 199-residue polypeptide: Recombination protein RecR (199 aa).

A C4-type zinc finger spans residues 58–73 (CRICYNITDTEVCNIC). One can recognise a Toprim domain in the interval 81-176 (SLICVVSHPM…KVTRIAHGVP (96 aa)).

Belongs to the RecR family.

Functionally, may play a role in DNA repair. It seems to be involved in an RecBC-independent recombinational process of DNA repair. It may act with RecF and RecO. The polypeptide is Recombination protein RecR (Thermoanaerobacter sp. (strain X514)).